A 92-amino-acid polypeptide reads, in one-letter code: Large ribosomal subunit protein bL28 (92 aa).

This sequence belongs to the bacterial ribosomal protein bL28 family.

The sequence is that of Large ribosomal subunit protein bL28 from Borrelia hermsii (strain HS1 / DAH).